A 226-amino-acid polypeptide reads, in one-letter code: Lysosomal-associated transmembrane protein 4B (226 aa).

4 helical membrane passes run 26–46, 72–92, 100–120, and 153–173; these read ILLG…LLSA, MCIA…ATYG, WIIP…LVAV, and CLVL…GYLI. The segment at 205 to 221 is required for NEDD4 interaction; that stretch reads PPYDDATVNSATKEPPP.

This sequence belongs to the LAPTM4/LAPTM5 transporter family. Homooligomer; upon reaching the lysosomes. Interacts with MCOLN1. Interacts with NEDD4; may play a role in the lysosomal sorting of LAPTM4B; enhances HGS association with NEDD4; mediates inhibition of EGFR degradation. Interacts with PIP5K1C; promotes SNX5 association with LAPTM4B; kinase activity of PIP5K1C is required; interaction is regulated by phosphatidylinositol 4,5-bisphosphate generated by PIP5K1C. Interacts with HGS; promotes HGS ubiquitination. Interacts with SNX5. Interacts with SLC3A2 and SLC7A5; recruits SLC3A2 and SLC7A5 to lysosomes to promote leucine uptake into these organelles and is required for mTORC1 activation. Interacts with LRRC32; decreases TGFB1 production in regulatory T cells. Interacts with BECN1; competes with EGFR for LAPTM4B binding; regulates EGFR activity. Interacts with EGFR; positively correlates with EGFR activation. Post-translationally, undergoes proteolytic cleavage following delivery to the lysosomes. Ubiquitinated by NEDD4. In terms of tissue distribution, strongly expressed in fetal ovary, testis, adrenal gland, liver and uterus, and weakly expressed in the spleen.

The protein resides in the endomembrane system. The protein localises to the late endosome membrane. It is found in the cell membrane. Its subcellular location is the cell projection. It localises to the lysosome membrane. The protein resides in the endosome membrane. The protein localises to the endosome. It is found in the multivesicular body membrane. Its subcellular location is the multivesicular body lumen. Its function is as follows. Required for optimal lysosomal function. Blocks EGF-stimulated EGFR intraluminal sorting and degradation. Conversely by binding with the phosphatidylinositol 4,5-bisphosphate, regulates its PIP5K1C interaction, inhibits HGS ubiquitination and relieves LAPTM4B inhibition of EGFR degradation. Recruits SLC3A2 and SLC7A5 (the Leu transporter) to the lysosome, promoting entry of leucine and other essential amino acid (EAA) into the lysosome, stimulating activation of proton-transporting vacuolar (V)-ATPase protein pump (V-ATPase) and hence mTORC1 activation. Plays a role as negative regulator of TGFB1 production in regulatory T cells. Binds ceramide and facilitates its exit from late endosome in order to control cell death pathways. The protein is Lysosomal-associated transmembrane protein 4B of Bos taurus (Bovine).